Consider the following 332-residue polypeptide: Trans-2'-carboxybenzalpyruvate hydratase-aldolase (332 aa).

The active-site Schiff-base intermediate with substrate is the Lys-178.

The protein belongs to the DapA family. As to quaternary structure, homotrimer.

The enzyme catalyses (3Z)-4-(2-carboxyphenyl)-2-oxobut-3-enoate + H2O = 2-formylbenzoate + pyruvate. Its activity is regulated as follows. Not inhibited by sodium borohydride or sodium pyruvate. Unaffected by EDTA, EGTA, Mn(2+), Mg(2+) and Ca(2+). Its function is as follows. Plays a role in phenanthrene catabolism. Catalyzes the transformation of trans-2'-carboxbenzalpyruvate to 2-formylbenzoate and pyruvate. In Nocardioides sp. (strain KP7), this protein is Trans-2'-carboxybenzalpyruvate hydratase-aldolase.